A 912-amino-acid polypeptide reads, in one-letter code: Microtubule-associated protein 10 (912 aa).

Disordered stretches follow at residues 31–50 (VAEEEQKEEGEGASPPRPSR), 209–239 (KSVEVSPQTWQENQQLQQPDSEPSPGDADKP), 254–296 (GRAF…QEGT), 335–366 (ASEEWDDGTFLKENVNPPTHTNPPEHTNSATG), 443–469 (SPESSVKSTCKSESKKDKLSVGENEKS), and 730–859 (RACD…VSSY). Residues 211–229 (VEVSPQTWQENQQLQQPDS) show a composition bias toward polar residues. Residues 254–263 (GRAFHSKADS) are compositionally biased toward basic and acidic residues. Residues 266 to 295 (TDSMENGKTNSDMCSKGSSERSVSPPNQEG) show a composition bias toward polar residues. Residues 347–362 (ENVNPPTHTNPPEHTN) show a composition bias toward low complexity. Residues 452–468 (CKSESKKDKLSVGENEK) are compositionally biased toward basic and acidic residues. The segment covering 735 to 768 (SPGTENPKNSQHTSTSSETRLSIRKNSSAKSSIL) has biased composition (polar residues). Over residues 796-807 (EASSSDFSSSQW) the composition is skewed to low complexity. Residues 841–859 (GCKSSEKSQSPRTSQVSSY) show a composition bias toward polar residues.

Interacts (via middle region) with microtubules.

The protein localises to the cytoplasm. It is found in the cytoskeleton. Its subcellular location is the spindle pole. The protein resides in the microtubule organizing center. It localises to the centrosome. The protein localises to the midbody. In terms of biological role, microtubule-associated protein (MAP) that plays a role in the regulation of cell division; promotes microtubule stability and participates in the organization of the spindle midzone and normal progress of cytokinesis. This is Microtubule-associated protein 10 (MAP10) from Bos taurus (Bovine).